The following is a 251-amino-acid chain: Aspartate/glutamate leucyltransferase (251 aa).

Belongs to the R-transferase family. Bpt subfamily.

The protein localises to the cytoplasm. It carries out the reaction N-terminal L-glutamyl-[protein] + L-leucyl-tRNA(Leu) = N-terminal L-leucyl-L-glutamyl-[protein] + tRNA(Leu) + H(+). It catalyses the reaction N-terminal L-aspartyl-[protein] + L-leucyl-tRNA(Leu) = N-terminal L-leucyl-L-aspartyl-[protein] + tRNA(Leu) + H(+). Its function is as follows. Functions in the N-end rule pathway of protein degradation where it conjugates Leu from its aminoacyl-tRNA to the N-termini of proteins containing an N-terminal aspartate or glutamate. This chain is Aspartate/glutamate leucyltransferase, found in Stenotrophomonas maltophilia (strain R551-3).